The sequence spans 72 residues: Movement protein TGBp3 (72 aa).

The Lumenal portion of the chain corresponds to 1–2 (MS). Residues 3–23 (LSFSLIVFAVGVAVSIGVLTL) traverse the membrane as a helical segment. Topologically, residues 24–72 (TTQQSSSYCLILVDGAKAVVEGCHLRQDIPAILSELKPASSPFNPLFCS) are cytoplasmic.

This sequence belongs to the Tymovirales TGBp3 protein family.

Its subcellular location is the host endoplasmic reticulum membrane. Its function is as follows. Plays a role in viral cell-to-cell propagation, by facilitating genome transport to neighboring plant cells through plasmosdesmata. May induce the formation of granular vesicles derived from the Endoplasmic reticulum, which align on actin filaments. The sequence is that of Movement protein TGBp3 (ORF4) from Lolium latent virus (isolate Lolium/USA/US1/-) (LoLV).